The sequence spans 146 residues: Hemoglobin subunit beta (146 aa).

N-acetylvaline is present on valine 1. Residues 2 to 146 (ELTAEEKAAV…VANALAHKYH (145 aa)) enclose the Globin domain. Phosphoserine is present on serine 44. At lysine 59 the chain carries N6-acetyllysine. Residue histidine 63 coordinates heme b. At lysine 82 the chain carries N6-acetyllysine. Histidine 92 lines the heme b pocket. Cysteine 93 bears the S-nitrosocysteine mark. Lysine 144 carries the post-translational modification N6-acetyllysine.

The protein belongs to the globin family. In terms of assembly, heterotetramer of two alpha chains and two beta chains. Red blood cells.

Functionally, involved in oxygen transport from the lung to the various peripheral tissues. This chain is Hemoglobin subunit beta (HBB), found in Ceratotherium simum (White rhinoceros).